A 92-amino-acid chain; its full sequence is Putative regulatory protein CA_C1717 (92 aa).

Belongs to the RemA family.

The sequence is that of Putative regulatory protein CA_C1717 from Clostridium acetobutylicum (strain ATCC 824 / DSM 792 / JCM 1419 / IAM 19013 / LMG 5710 / NBRC 13948 / NRRL B-527 / VKM B-1787 / 2291 / W).